The following is a 250-amino-acid chain: 5-oxoprolinase subunit A (250 aa).

It belongs to the LamB/PxpA family. Forms a complex composed of PxpA, PxpB and PxpC.

It catalyses the reaction 5-oxo-L-proline + ATP + 2 H2O = L-glutamate + ADP + phosphate + H(+). Functionally, catalyzes the cleavage of 5-oxoproline to form L-glutamate coupled to the hydrolysis of ATP to ADP and inorganic phosphate. The sequence is that of 5-oxoprolinase subunit A from Paraburkholderia phytofirmans (strain DSM 17436 / LMG 22146 / PsJN) (Burkholderia phytofirmans).